The following is a 74-amino-acid chain: Antimicrobial peptide AcrAP2 (74 aa).

The N-terminal stretch at 1–22 (MEIKYLLTVFLVLLIVSDHCQA) is a signal peptide. Lysine 40 carries the lysine amide modification. Residues 46 to 74 (NLDGQIDRFRNFRKRDAELEELLSKLPIY) constitute a propeptide that is removed on maturation.

The protein belongs to the non-disulfide-bridged peptide (NDBP) superfamily. Short antimicrobial peptide (group 4) family. In terms of tissue distribution, expressed by the venom gland.

The protein resides in the secreted. It is found in the target cell membrane. In terms of biological role, has antimicrobial activity against the Gram-positive bacteria S.aureus (MIC=8 uM) and the yeast C.albicans (MIC=16 uM). Causes hemolysis on horse erythrocytes (64 uM for 100% hemolysis). Minimum bactericidal concentrations have also been tested against S.aureus and is four-fold higher (MBC=32 uM). The protein is Antimicrobial peptide AcrAP2 of Androctonus crassicauda (Arabian fat-tailed scorpion).